The following is a 321-amino-acid chain: Putative ribose-phosphate pyrophosphokinase 2 (321 aa).

ATP-binding positions include 41–43 and 100–101; these read DGE and RQ. H134 contributes to the Mg(2+) binding site. D-ribose 5-phosphate contacts are provided by residues D223 and 227–231; that span reads NTGVT.

It belongs to the ribose-phosphate pyrophosphokinase family. Class I subfamily. Homohexamer. Mg(2+) is required as a cofactor.

The protein localises to the cytoplasm. It catalyses the reaction D-ribose 5-phosphate + ATP = 5-phospho-alpha-D-ribose 1-diphosphate + AMP + H(+). It participates in metabolic intermediate biosynthesis; 5-phospho-alpha-D-ribose 1-diphosphate biosynthesis; 5-phospho-alpha-D-ribose 1-diphosphate from D-ribose 5-phosphate (route I): step 1/1. Involved in the biosynthesis of the central metabolite phospho-alpha-D-ribosyl-1-pyrophosphate (PRPP) via the transfer of pyrophosphoryl group from ATP to 1-hydroxyl of ribose-5-phosphate (Rib-5-P). The protein is Putative ribose-phosphate pyrophosphokinase 2 of Lactococcus lactis subsp. lactis (strain IL1403) (Streptococcus lactis).